The primary structure comprises 1284 residues: Peroxisomal ATPase PEX1 (1284 aa).

Positions 339–373 (SPKQQQDKSKQGVLLPDKEKQLSKSPDHKQISSNR) are disordered. A compositionally biased stretch (basic and acidic residues) spans 343–373 (QQDKSKQGVLLPDKEKQLSKSPDHKQISSNR). Residues 600–607 (GGKGSGKS) and 882–889 (GPPGTGKT) contribute to the ATP site. Residues S1182, S1210, and S1212 each carry the phosphoserine modification. Residues 1261–1284 (FQNPKKRKNQSGTVFRTGQKVTLA) form a disordered region. Residues 1270-1284 (QSGTVFRTGQKVTLA) are compositionally biased toward polar residues.

This sequence belongs to the AAA ATPase family. Homooligomer; homooligomerizes in the cytosol, interaction with PEX6 promotes dissociation of the homooligomer. Interacts with PEX6; forming the PEX1-PEX6 AAA ATPase complex, which is composed of a heterohexamer formed by a trimer of PEX1-PEX6 dimers. Interacts indirectly with PEX26, via its interaction with PEX6.

The protein localises to the cytoplasm. It localises to the cytosol. It is found in the peroxisome membrane. It catalyses the reaction ATP + H2O = ADP + phosphate + H(+). Its function is as follows. Component of the PEX1-PEX6 AAA ATPase complex, a protein dislocase complex that mediates the ATP-dependent extraction of the PEX5 receptor from peroxisomal membranes, an essential step for PEX5 recycling. Specifically recognizes PEX5 monoubiquitinated at 'Cys-11', and pulls it out of the peroxisome lumen through the PEX2-PEX10-PEX12 retrotranslocation channel. Extraction by the PEX1-PEX6 AAA ATPase complex is accompanied by unfolding of the TPR repeats and release of bound cargo from PEX5. In Mus musculus (Mouse), this protein is Peroxisomal ATPase PEX1.